The sequence spans 70 residues: uncharacterized protein (70 aa).

This is an uncharacterized protein from Torque teno tamarin virus (isolate So-TTV2).